A 168-amino-acid polypeptide reads, in one-letter code: Probable chorismate pyruvate-lyase (168 aa).

Residues Arg-75, Ile-114, and Glu-155 each coordinate substrate.

It belongs to the UbiC family.

Its subcellular location is the cytoplasm. It catalyses the reaction chorismate = 4-hydroxybenzoate + pyruvate. Its pathway is cofactor biosynthesis; ubiquinone biosynthesis. Removes the pyruvyl group from chorismate, with concomitant aromatization of the ring, to provide 4-hydroxybenzoate (4HB) for the ubiquinone pathway. This Psychrobacter cryohalolentis (strain ATCC BAA-1226 / DSM 17306 / VKM B-2378 / K5) protein is Probable chorismate pyruvate-lyase.